Here is a 310-residue protein sequence, read N- to C-terminus: Upstream stimulatory factor 1 (310 aa).

The segment covering 1 to 17 (MKGQQKTAETEEGTVQI) has biased composition (polar residues). Disordered regions lie at residues 1–26 (MKGQ…ATGE) and 171–209 (QGGS…EVER). A compositionally biased stretch (basic and acidic residues) spans 190-209 (EAPRTTRDEKRRAQHNEVER). The bHLH domain maps to 199–254 (KRRAQHNEVERRRRDKINNWIVQLSKIIPDCSMESTKSGQSKGGILSKACDYIQEL). The leucine-zipper stretch occupies residues 271-292 (LQLDNDVLRQQVEDLKNKNLLL). Residue Lys306 forms a Glycyl lysine isopeptide (Lys-Gly) (interchain with G-Cter in SUMO2) linkage.

As to quaternary structure, efficient DNA binding requires dimerization with another bHLH protein. Binds DNA as a homodimer or a heterodimer (USF1/USF2).

The protein resides in the nucleus. In terms of biological role, transcription factor that binds to a symmetrical DNA sequence (E-boxes) (5'-CACGTG-3') that is found in a variety of viral and cellular promoters. The sequence is that of Upstream stimulatory factor 1 (USF1) from Bos taurus (Bovine).